Reading from the N-terminus, the 388-residue chain is 4-hydroxy-3-methylbut-2-en-1-yl diphosphate synthase (flavodoxin) (388 aa).

Residues C281, C284, C316, and E323 each coordinate [4Fe-4S] cluster.

It belongs to the IspG family. [4Fe-4S] cluster is required as a cofactor.

The enzyme catalyses (2E)-4-hydroxy-3-methylbut-2-enyl diphosphate + oxidized [flavodoxin] + H2O + 2 H(+) = 2-C-methyl-D-erythritol 2,4-cyclic diphosphate + reduced [flavodoxin]. Its pathway is isoprenoid biosynthesis; isopentenyl diphosphate biosynthesis via DXP pathway; isopentenyl diphosphate from 1-deoxy-D-xylulose 5-phosphate: step 5/6. Converts 2C-methyl-D-erythritol 2,4-cyclodiphosphate (ME-2,4cPP) into 1-hydroxy-2-methyl-2-(E)-butenyl 4-diphosphate. This Pseudarthrobacter chlorophenolicus (strain ATCC 700700 / DSM 12829 / CIP 107037 / JCM 12360 / KCTC 9906 / NCIMB 13794 / A6) (Arthrobacter chlorophenolicus) protein is 4-hydroxy-3-methylbut-2-en-1-yl diphosphate synthase (flavodoxin).